Here is a 298-residue protein sequence, read N- to C-terminus: Putative insertion sequence ATP-binding protein y4iQ/y4nD/y4sD (298 aa).

114–121 is a binding site for ATP; the sequence is GPPGGGKS. Residues 276-298 form a disordered region; that stretch reads RQSEHDETLASDNQHDTFMPTAT.

It belongs to the IS21/IS1162 putative ATP-binding protein family.

In Sinorhizobium fredii (strain NBRC 101917 / NGR234), this protein is Putative insertion sequence ATP-binding protein y4iQ/y4nD/y4sD.